We begin with the raw amino-acid sequence, 298 residues long: Putative cysteine protease YopT-like blr2058 (298 aa).

A compositionally biased stretch (basic and acidic residues) spans 1 to 14 (MYNRVDGEYAHTEQ). 2 disordered regions span residues 1–25 (MYNR…ADGS) and 59–80 (SDAI…SSSS). Residues 65–80 (SSNTSGLSTSSLSSSS) are compositionally biased toward low complexity. Cysteine 109 is an active-site residue. Over residues 137 to 162 (NHRSAARRQEQSEKLKTQLKEDKAEG) the composition is skewed to basic and acidic residues. The interval 137–166 (NHRSAARRQEQSEKLKTQLKEDKAEGSHNF) is disordered. Catalysis depends on residues histidine 223 and aspartate 238.

Belongs to the peptidase C58 family.

Its function is as follows. Potential cysteine protease, which may play a central role after invasion of host cell. This is Putative cysteine protease YopT-like blr2058 from Bradyrhizobium diazoefficiens (strain JCM 10833 / BCRC 13528 / IAM 13628 / NBRC 14792 / USDA 110).